Reading from the N-terminus, the 279-residue chain is Urease accessory protein UreD (279 aa).

Belongs to the UreD family. As to quaternary structure, ureD, UreF and UreG form a complex that acts as a GTP-hydrolysis-dependent molecular chaperone, activating the urease apoprotein by helping to assemble the nickel containing metallocenter of UreC. The UreE protein probably delivers the nickel.

The protein localises to the cytoplasm. In terms of biological role, required for maturation of urease via the functional incorporation of the urease nickel metallocenter. The polypeptide is Urease accessory protein UreD (Nostoc sp. (strain PCC 7120 / SAG 25.82 / UTEX 2576)).